Here is a 252-residue protein sequence, read N- to C-terminus: Zinc import ATP-binding protein ZnuC (252 aa).

The 216-residue stretch at 5 to 220 (VTLNKISVTF…PEFIAMFGQR (216 aa)) folds into the ABC transporter domain. 37-44 (GPNGAGKS) is a binding site for ATP.

The protein belongs to the ABC transporter superfamily. Zinc importer (TC 3.A.1.15.5) family. The complex is composed of two ATP-binding proteins (ZnuC), two transmembrane proteins (ZnuB) and a solute-binding protein (ZnuA).

It is found in the cell inner membrane. The enzyme catalyses Zn(2+)(out) + ATP(in) + H2O(in) = Zn(2+)(in) + ADP(in) + phosphate(in) + H(+)(in). Its function is as follows. Part of the ABC transporter complex ZnuABC involved in zinc import. Responsible for energy coupling to the transport system. The polypeptide is Zinc import ATP-binding protein ZnuC (Yersinia enterocolitica serotype O:8 / biotype 1B (strain NCTC 13174 / 8081)).